We begin with the raw amino-acid sequence, 373 residues long: GTP cyclohydrolase 1 type 2 homolog (373 aa).

A divalent metal cation-binding residues include histidine 67, histidine 68, aspartate 106, histidine 333, and glutamate 336.

Belongs to the GTP cyclohydrolase I type 2/NIF3 family. Homohexamer.

This Listeria monocytogenes serovar 1/2a (strain ATCC BAA-679 / EGD-e) protein is GTP cyclohydrolase 1 type 2 homolog.